Reading from the N-terminus, the 431-residue chain is Cyclin-B2-4 (431 aa).

Residues 1-30 are disordered; it reads MGGSDENRHGVIGPMNRQQGGLRGGKVIPT.

This sequence belongs to the cyclin family. Cyclin AB subfamily. Interacts with SMR11.

The protein is Cyclin-B2-4 (CYCB2-4) of Arabidopsis thaliana (Mouse-ear cress).